A 258-amino-acid chain; its full sequence is Hydroxyacylglutathione hydrolase (258 aa).

Residues H52, H54, D56, H57, H109, D126, and H164 each contribute to the Zn(2+) site.

Belongs to the metallo-beta-lactamase superfamily. Glyoxalase II family. Monomer. Requires Zn(2+) as cofactor.

The catalysed reaction is an S-(2-hydroxyacyl)glutathione + H2O = a 2-hydroxy carboxylate + glutathione + H(+). The protein operates within secondary metabolite metabolism; methylglyoxal degradation; (R)-lactate from methylglyoxal: step 2/2. Functionally, thiolesterase that catalyzes the hydrolysis of S-D-lactoyl-glutathione to form glutathione and D-lactic acid. The protein is Hydroxyacylglutathione hydrolase of Xylella fastidiosa (strain M23).